We begin with the raw amino-acid sequence, 291 residues long: Inositol-1-monophosphatase (291 aa).

Residues Glu-83, Asp-104, Ile-106, and Asp-107 each contribute to the Mg(2+) site. Glu-83 contributes to the substrate binding site. Residues 106 to 109, Arg-206, and Asp-235 each bind substrate; that span reads IDGT. A Mg(2+)-binding site is contributed by Asp-235.

The protein belongs to the inositol monophosphatase superfamily. Mg(2+) is required as a cofactor.

It carries out the reaction a myo-inositol phosphate + H2O = myo-inositol + phosphate. This is Inositol-1-monophosphatase (suhB) from Mycobacterium leprae (strain TN).